The sequence spans 705 residues: Fatty acid oxidation complex subunit alpha (705 aa).

The tract at residues 1–188 (MGKTFNLTRR…KMGLVNDVVP (188 aa)) is enoyl-CoA hydratase. The tract at residues 308 to 705 (RKVKKAVILG…AMAAEKARFF (398 aa)) is 3-hydroxyacyl-CoA dehydrogenase.

In the N-terminal section; belongs to the enoyl-CoA hydratase/isomerase family. The protein in the central section; belongs to the 3-hydroxyacyl-CoA dehydrogenase family. In terms of assembly, heterotetramer of two alpha chains (FadJ) and two beta chains (FadI).

The protein resides in the cytoplasm. It catalyses the reaction a (3S)-3-hydroxyacyl-CoA = a (2E)-enoyl-CoA + H2O. The catalysed reaction is a 4-saturated-(3S)-3-hydroxyacyl-CoA = a (3E)-enoyl-CoA + H2O. The enzyme catalyses a (3S)-3-hydroxyacyl-CoA + NAD(+) = a 3-oxoacyl-CoA + NADH + H(+). It carries out the reaction (3S)-3-hydroxybutanoyl-CoA = (3R)-3-hydroxybutanoyl-CoA. It participates in lipid metabolism; fatty acid beta-oxidation. In terms of biological role, catalyzes the formation of a hydroxyacyl-CoA by addition of water on enoyl-CoA. Also exhibits 3-hydroxyacyl-CoA epimerase and 3-hydroxyacyl-CoA dehydrogenase activities. This chain is Fatty acid oxidation complex subunit alpha, found in Shewanella oneidensis (strain ATCC 700550 / JCM 31522 / CIP 106686 / LMG 19005 / NCIMB 14063 / MR-1).